Here is a 94-residue protein sequence, read N- to C-terminus: DNA-directed RNA polymerase subunit omega (94 aa).

The protein belongs to the RNA polymerase subunit omega family. In terms of assembly, the RNAP catalytic core consists of 2 alpha, 1 beta, 1 beta' and 1 omega subunit. When a sigma factor is associated with the core the holoenzyme is formed, which can initiate transcription.

It carries out the reaction RNA(n) + a ribonucleoside 5'-triphosphate = RNA(n+1) + diphosphate. In terms of biological role, promotes RNA polymerase assembly. Latches the N- and C-terminal regions of the beta' subunit thereby facilitating its interaction with the beta and alpha subunits. This Bifidobacterium longum (strain DJO10A) protein is DNA-directed RNA polymerase subunit omega.